The chain runs to 332 residues: Biotin synthase (332 aa).

In terms of domain architecture, Radical SAM core spans 51 to 278 (RTIQLSTLMS…KSYVRLSAGR (228 aa)). The [4Fe-4S] cluster site is built by Cys-66, Cys-70, and Cys-73. Cys-110, Cys-141, Cys-201, and Arg-273 together coordinate [2Fe-2S] cluster.

Belongs to the radical SAM superfamily. Biotin synthase family. Homodimer. The cofactor is [4Fe-4S] cluster. It depends on [2Fe-2S] cluster as a cofactor.

It catalyses the reaction (4R,5S)-dethiobiotin + (sulfur carrier)-SH + 2 reduced [2Fe-2S]-[ferredoxin] + 2 S-adenosyl-L-methionine = (sulfur carrier)-H + biotin + 2 5'-deoxyadenosine + 2 L-methionine + 2 oxidized [2Fe-2S]-[ferredoxin]. It participates in cofactor biosynthesis; biotin biosynthesis; biotin from 7,8-diaminononanoate: step 2/2. Its function is as follows. Catalyzes the conversion of dethiobiotin (DTB) to biotin by the insertion of a sulfur atom into dethiobiotin via a radical-based mechanism. The chain is Biotin synthase from Haemophilus influenzae (strain PittGG).